The following is a 194-amino-acid chain: Peptidyl-tRNA hydrolase (194 aa).

Position 17 (H17) interacts with tRNA. H22 functions as the Proton acceptor in the catalytic mechanism. F68, N70, and N116 together coordinate tRNA.

It belongs to the PTH family. In terms of assembly, monomer.

The protein resides in the cytoplasm. The catalysed reaction is an N-acyl-L-alpha-aminoacyl-tRNA + H2O = an N-acyl-L-amino acid + a tRNA + H(+). In terms of biological role, hydrolyzes ribosome-free peptidyl-tRNAs (with 1 or more amino acids incorporated), which drop off the ribosome during protein synthesis, or as a result of ribosome stalling. Catalyzes the release of premature peptidyl moieties from peptidyl-tRNA molecules trapped in stalled 50S ribosomal subunits, and thus maintains levels of free tRNAs and 50S ribosomes. The sequence is that of Peptidyl-tRNA hydrolase from Xanthomonas oryzae pv. oryzae (strain MAFF 311018).